A 300-amino-acid polypeptide reads, in one-letter code: Cyclic nucleotide synthase CdnE01 (300 aa).

Residues Asp-63, Asp-65, and Asp-137 each contribute to the Mg(2+) site.

It belongs to the CD-NTase family. E01 subfamily. Mg(2+) serves as cofactor.

With respect to regulation, binds to and probably activated by a virus-derived, approximately 400 nucleotide RNA (called CBASS-activating bacteriophage RNA, cabRNA) that begins in the viral terminase subunit terS and extends into terL, as well as by a shorter RNA with part of the cabRNA sequence able to form a hairpin. RNA secondary and/or tertiary structure, as well as viral infection itself, are important for CdnE activation. Its function is as follows. Cyclic nucleotide synthase (second messenger synthase) of a CBASS antivirus system. CBASS (cyclic oligonucleotide-based antiphage signaling system) provides immunity against bacteriophage. The CD-NTase protein synthesizes cyclic nucleotides in response to infection; these serve as specific second messenger signals. The signals activate a diverse range of effectors, leading to bacterial cell death and thus abortive phage infection. A type I-B CBASS system. Protects S.aureus against phage infection. When the CBASS operon (cdnE and the following gene) is introduced in S.aureus strain RN4220 there is strong protection against lytic DNA phages 80alpha-vir and phi-NM1-gamma-6 but little to no protection against phages phi-NM4-gamma-4 or phi-12-gamma-3. This Staphylococcus haemolyticus protein is Cyclic nucleotide synthase CdnE01.